The following is an 86-amino-acid chain: High affinity immunoglobulin epsilon receptor subunit gamma (86 aa).

The first 18 residues, 1-18 (MIPAVVLLLLLLVEQAAA), serve as a signal peptide directing secretion. Residues 19–23 (LGEPQ) are Extracellular-facing. The chain crosses the membrane as a helical span at residues 24 to 44 (LCYILDAILFLYGIVLTLLYC). Residues 45–86 (RLKIQVRKAAIASYEKSDGVYTGLSTRNQETYETLKHEKPPQ) are Cytoplasmic-facing. The ITAM domain occupies 54–82 (AIASYEKSDGVYTGLSTRNQETYETLKHE). Y65 bears the Phosphotyrosine mark. Phosphoserine is present on S69. Y76 bears the Phosphotyrosine mark. T78 carries the phosphothreonine modification.

Belongs to the CD3Z/FCER1G family. In terms of assembly, igE Fc receptor is a tetramer of an alpha chain, a beta chain, and two disulfide linked gamma chains. Associates with FCGR1A; forms a functional signaling complex. The signaling subunit of immunoglobulin gamma (IgG) Fc receptor complex. As a homodimer or a heterodimer of CD247 and FCER1G, associates with the ligand binding subunit FCGR3A to form a functional receptor complex. Associates with CLEC6A. Interacts with CLEC4E. Interacts (via ITAM domain) with SYK (via SH2 domains); activates SYK, enabling integrin-mediated activation of neutrophils and macrophages. Interacts with CSF2RB and recruits SYK in response to IL3 stimulation; this interaction is direct. Interacts with CD300LH; the interaction may be indirect. Interacts with CD300LD. Interacts with TARM1.

The protein resides in the cell membrane. In terms of biological role, adapter protein containing an immunoreceptor tyrosine-based activation motif (ITAM) that transduces activation signals from various immunoreceptors. As a component of the high-affinity immunoglobulin E (IgE) receptor, mediates allergic inflammatory signaling in mast cells. As a constitutive component of interleukin-3 receptor complex, selectively mediates interleukin 4/IL4 production by basophils priming T-cells toward effector T-helper 2 subset. Associates with pattern recognition receptors CLEC4D and CLEC4E to form a functional signaling complex in myeloid cells. Binding of mycobacterial trehalose 6,6'-dimycolate (TDM) to this receptor complex leads to phosphorylation of ITAM, triggering activation of SYK, CARD9 and NF-kappa-B, consequently driving maturation of antigen-presenting cells and shaping antigen-specific priming of T-cells toward effector T-helper 1 and T-helper 17 cell subtypes. May function cooperatively with other activating receptors. Functionally linked to integrin beta-2/ITGB2-mediated neutrophil activation. Also involved in integrin alpha-2/ITGA2-mediated platelet activation. The sequence is that of High affinity immunoglobulin epsilon receptor subunit gamma (FCER1G) from Macaca fascicularis (Crab-eating macaque).